The sequence spans 178 residues: Endothelin-2 (178 aa).

Positions 1 to 24 are cleaved as a signal peptide; that stretch reads MVSVPTAWCSVALALLVALHEGKD. A propeptide spanning residues 25-46 is cleaved from the precursor; the sequence is QAAATLEQPASSPRARAAHLRL. 2 disulfides stabilise this stretch: Cys49/Cys63 and Cys51/Cys59. Residues 70-178 constitute a propeptide that is removed on maturation; it reads VNTPGQTAPY…RTTHSRHRKR (109 aa). The tract at residues 96 to 111 is endothelin-like; it reads CECSSARDPACATFCH. The disordered stretch occupies residues 154–178; that stretch reads KTHFAKRQQEATREPRTTHSRHRKR. A compositionally biased stretch (basic and acidic residues) spans 160–170; the sequence is RQQEATREPRT.

Belongs to the endothelin/sarafotoxin family.

It is found in the secreted. Endothelins are endothelium-derived vasoconstrictor peptides. The polypeptide is Endothelin-2 (EDN2) (Oryctolagus cuniculus (Rabbit)).